The chain runs to 155 residues: SsrA-binding protein (155 aa).

It belongs to the SmpB family.

It is found in the cytoplasm. Its function is as follows. Required for rescue of stalled ribosomes mediated by trans-translation. Binds to transfer-messenger RNA (tmRNA), required for stable association of tmRNA with ribosomes. tmRNA and SmpB together mimic tRNA shape, replacing the anticodon stem-loop with SmpB. tmRNA is encoded by the ssrA gene; the 2 termini fold to resemble tRNA(Ala) and it encodes a 'tag peptide', a short internal open reading frame. During trans-translation Ala-aminoacylated tmRNA acts like a tRNA, entering the A-site of stalled ribosomes, displacing the stalled mRNA. The ribosome then switches to translate the ORF on the tmRNA; the nascent peptide is terminated with the 'tag peptide' encoded by the tmRNA and targeted for degradation. The ribosome is freed to recommence translation, which seems to be the essential function of trans-translation. This is SsrA-binding protein from Lactococcus lactis subsp. cremoris (strain MG1363).